The following is a 152-amino-acid chain: UPF0260 protein BR1477/BS1330_I1471 (152 aa).

This sequence belongs to the UPF0260 family.

The chain is UPF0260 protein BR1477/BS1330_I1471 from Brucella suis biovar 1 (strain 1330).